The chain runs to 81 residues: Photosystem I iron-sulfur center (81 aa).

2 4Fe-4S ferredoxin-type domains span residues 2–31 and 39–68; these read SHSVKIYDTCIGCTQCVRACPTDVLEMIPW and IAPAPRTEDCVGCKRCESACPTDFLSVRVY. Positions 11, 14, 17, 21, 48, 51, 54, and 58 each coordinate [4Fe-4S] cluster.

The eukaryotic PSI reaction center is composed of at least 11 subunits. It depends on [4Fe-4S] cluster as a cofactor.

It is found in the plastid. The protein localises to the chloroplast thylakoid membrane. It carries out the reaction reduced [plastocyanin] + hnu + oxidized [2Fe-2S]-[ferredoxin] = oxidized [plastocyanin] + reduced [2Fe-2S]-[ferredoxin]. Its function is as follows. Apoprotein for the two 4Fe-4S centers FA and FB of photosystem I (PSI); essential for photochemical activity. FB is the terminal electron acceptor of PSI, donating electrons to ferredoxin. The C-terminus interacts with PsaA/B/D and helps assemble the protein into the PSI complex. Required for binding of PsaD and PsaE to PSI. PSI is a plastocyanin-ferredoxin oxidoreductase, converting photonic excitation into a charge separation, which transfers an electron from the donor P700 chlorophyll pair to the spectroscopically characterized acceptors A0, A1, FX, FA and FB in turn. The polypeptide is Photosystem I iron-sulfur center (Chloranthus spicatus (Chulantree)).